The primary structure comprises 461 residues: Protein-serine O-palmitoleoyltransferase porcupine (461 aa).

The Cytoplasmic portion of the chain corresponds to 1 to 17 (MATFSRQEFFQQLLQGC). Residues 18-38 (LLPTVQQGLDQIWLLLTICFA) traverse the membrane as a helical segment. At 39-66 (CRLLWRLGLPSYLKHASTVAGGFFSLYH) the chain is on the extracellular side. Residues 67–87 (FFQLHMVWVVLLSLLCYLVLF) form a helical membrane-spanning segment. At 88 to 95 (LCRHSSHR) the chain is on the cytoplasmic side. Residues 96 to 116 (GVFLSVTILIYLLMGEMHMVD) form a helical membrane-spanning segment. The Extracellular segment spans residues 117-152 (TVTWHKMRGAQMIVAMKAVSLGFDLDRGEVGAVPSP). Residues 153-173 (VEFMGYLYFVGTIVFGPWISF) traverse the membrane as a helical segment. At 174–198 (HSYLQAVQGRPLSRRWLKKVARSLA) the chain is on the cytoplasmic side. Residues 199–219 (LALLCLVLSTCVGPYLFPYFI) form a helical membrane-spanning segment. The Extracellular portion of the chain corresponds to 220–252 (PLDGDRLLRNKKRKARGTMVRWLRAYESAVSFH). The chain crosses the membrane as a helical span at residues 253-273 (FSNYFVGFLSEATATLAGAGF). At 274-337 (TEEKDHLEWD…SAVLVTYAAS (64 aa)) the chain is on the cytoplasmic side. Residues 338-358 (ALLHGFSFHLAAVLLSLAFIT) form a helical membrane-spanning segment. Residue His-341 is part of the active site. Residues 359 to 396 (YVEHVLRKRLAQILSACILSKRCLPDCSHRHRLGLGVR) lie on the Extracellular side of the membrane. A helical membrane pass occupies residues 397 to 417 (ALNLLFGALAIFHLSYLGSLF). Residues 418–461 (DVDVDDTTEEQGYGMAYTVHKWSELSWASHWVTFGCWIFYRLIG) are Cytoplasmic-facing.

The protein belongs to the membrane-bound acyltransferase family. Porcupine subfamily. Interacts with WNT1, WNT3, WNT3A, WNT4, WNT5A, WNT5B, WNT6, WNT7A and WNT7B. As to expression, expressed in brain, heart, kidney, liver, lung, muscle, spleen and testis. Isoform 4 is strongly expressed in kidney, liver, lung, spleen and testis. Isoform 1 is strongly expressed in brain, heart and muscle and poorly in kidney, liver, lung, spleen and testis.

The protein localises to the endoplasmic reticulum membrane. It catalyses the reaction [Wnt protein]-L-serine + (9Z)-hexadecenoyl-CoA = [Wnt protein]-O-(9Z)-hexadecenoyl-L-serine + CoA. In terms of biological role, protein-serine O-palmitoleoyltransferase that acts as a key regulator of the Wnt signaling pathway by mediating the attachment of palmitoleate, a 16-carbon monounsaturated fatty acid (C16:1(9Z)), to Wnt proteins. Serine palmitoleoylation of WNT proteins is required for efficient binding to frizzled receptors. This is Protein-serine O-palmitoleoyltransferase porcupine from Mus musculus (Mouse).